The primary structure comprises 157 residues: MSQVILDLQIACADSQGLPTEADFQHWLEAVLPQFQEVSEVTIRVVDEAESHELNLTYRGKDKPTNVLSFPFEAPPEIELPLLGDLIICRQVVEQEAVEQEKALLAHWAHMVVHGSLHLLGYDHIVDDEAEEMESIETEIMQSLGYPDPYISEKDPE.

Positions 114, 118, and 124 each coordinate Zn(2+).

This sequence belongs to the endoribonuclease YbeY family. Zn(2+) is required as a cofactor.

It localises to the cytoplasm. Its function is as follows. Single strand-specific metallo-endoribonuclease involved in late-stage 70S ribosome quality control and in maturation of the 3' terminus of the 16S rRNA. In Yersinia enterocolitica serotype O:8 / biotype 1B (strain NCTC 13174 / 8081), this protein is Endoribonuclease YbeY.